Here is a 288-residue protein sequence, read N- to C-terminus: MQGPGGNVSRGLPGGPASTVASGAGRCESGALMHSFGIFLQGLLGVVAFSTLMLKRFREPKHERRPWRIWFLDTSKQAIGMLFIHFANVYLADLTEEDPCSLYLINFLLDATVGMLLIYVGVRAVGVLVEWQQWESLRFGEYGDPLQCGAWVGQCALYIVIMIFEKSVVFIVLLILQWKKVALLNPIENPDLKLAIVMLIVPFFVNAFMFWVVDNFLMRKGKTKAKLEERGANQDSRNGSKVRYRRAASHEESESEILISADDEMEESDAEEDLRRPVKKKHRFGLPV.

Residues 1–28 (MQGPGGNVSRGLPGGPASTVASGAGRCE) lie on the Cytoplasmic side of the membrane. A run of 3 helical transmembrane segments spans residues 29–49 (SGALMHSFGIFLQGLLGVVAF), 69–89 (IWFLDTSKQAIGMLFIHFANV), and 102–122 (LYLINFLLDATVGMLLIYVGV). The GXXXG motif signature appears at 149 to 153 (GAWVG). Helical transmembrane passes span 156–176 (ALYIVIMIFEKSVVFIVLLIL) and 194–214 (LAIVMLIVPFFVNAFMFWVVD). The Cytoplasmic portion of the chain corresponds to 215–288 (NFLMRKGKTK…KKKHRFGLPV (74 aa)). Residues 228–288 (EERGANQDSR…KKKHRFGLPV (61 aa)) are disordered. Positions 241–246 (KVRYRR) are required for localization in the endoplasmic reticulum. Acidic residues predominate over residues 261 to 272 (ADDEMEESDAEE). Over residues 277 to 288 (PVKKKHRFGLPV) the composition is skewed to basic residues.

This sequence belongs to the STIMATE family. As to quaternary structure, homooligomer. Interacts with STIM1.

The protein localises to the endoplasmic reticulum membrane. In terms of biological role, acts as a regulator of store-operated Ca(2+) entry (SOCE) at junctional sites that connect the endoplasmic reticulum (ER) and plasma membrane (PM), called ER-plasma membrane (ER-PM) junction or cortical ER. SOCE is a Ca(2+) influx following depletion of intracellular Ca(2+) stores. Acts by interacting with STIM1, promoting STIM1 conformational switch. Involved in STIM1 relocalization to ER-PM junctions. Contributes to the maintenance and reorganization of store-dependent ER-PM junctions. This Rattus norvegicus (Rat) protein is Store-operated calcium entry regulator STIMATE.